The chain runs to 243 residues: Terpene cyclase dpmaB (243 aa).

Helical transmembrane passes span Pro11–Trp31, Ala51–Phe71, Leu112–Leu132, Ala141–Ser161, Ser169–Leu189, and Ile207–Val227.

This sequence belongs to the paxB family.

The protein resides in the membrane. Its pathway is secondary metabolite biosynthesis; terpenoid biosynthesis. In terms of biological role, terpene cyclase; part of the gene cluster that mediates the biosynthesis of the diterpenoid pyrones subglutinols A and B. The first step of the pathway is the synthesis of the alpha-pyrone moiety by the polyketide synthase dpmaA via condensation of one acetyl-CoA starter unit with 3 malonyl-CoA units and 2 methylations. The alpha-pyrone is then combined with geranylgeranyl pyrophosphate (GGPP) formed by the GGPP synthase dpmaD through the action of the prenyltransferase dpmaC to yield a linear alpha-pyrone diterpenoid. Subsequent steps in the diterpenoid pyrone biosynthetic pathway involve the decalin core formation, which is initiated by the epoxidation of the C10-C11 olefin by the FAD-dependent oxidoreductase dpmaE, and is followed by a cyclization cascade catalyzed by the terpene cyclase dpmaB. The dehydrogenase dpmaF is then involved in tetrahydrofuran (THF) ring formation at the C5 unit to complete the formation of subglutinols A and B. This chain is Terpene cyclase dpmaB, found in Metarhizium anisopliae (Entomophthora anisopliae).